The chain runs to 470 residues: uncharacterized protein (470 aa).

Positions 439–470 (SIKSSKSKKQLKSSKSKKPIKHTKTKNIYVET) are disordered. Residues 443–463 (SKSKKQLKSSKSKKPIKHTKT) are compositionally biased toward basic residues.

This is an uncharacterized protein from Acanthamoeba polyphaga mimivirus (APMV).